A 213-amino-acid chain; its full sequence is MAAPATSVLSRQVRSFSTSVVRPFSKLVRPPVQVYGIEGRYATALYSAASKQKRLDQVEKELLRVGQLLKDPKVSLAVLNPYIKRSIKVKSLKDITTKEKFSPLTANLMNLLAENGRLGNTQGVISAFSTIMSVHRGEVPCTVTTAFPLDEAVLSELKTVLNSFLSKGQILNLEVKTDPSIMGGMIVRIGEKYVDMSAKSKIQKLSKAMRDLL.

The transit peptide at 1–23 directs the protein to the mitochondrion; sequence MAAPATSVLSRQVRSFSTSVVRP. The SIFI-degron motif lies at 5 to 23; that stretch reads ATSVLSRQVRSFSTSVVRP. Lysine 60, lysine 70, and lysine 73 each carry N6-acetyllysine. An N6-succinyllysine modification is found at lysine 90. Lysine 100 and lysine 158 each carry N6-acetyllysine; alternate. Residues lysine 100 and lysine 158 each carry the N6-succinyllysine; alternate modification. An N6-acetyllysine mark is found at lysine 176 and lysine 192. Lysine 199 carries the post-translational modification N6-succinyllysine.

It belongs to the ATPase delta chain family. As to quaternary structure, component of the ATP synthase complex composed at least of ATP5F1A/subunit alpha, ATP5F1B/subunit beta, ATP5MC1/subunit c (homooctomer), MT-ATP6/subunit a, MT-ATP8/subunit 8, ATP5ME/subunit e, ATP5MF/subunit f, ATP5MG/subunit g, ATP5MK/subunit k, ATP5MJ/subunit j, ATP5F1C/subunit gamma, ATP5F1D/subunit delta, ATP5F1E/subunit epsilon, ATP5PF/subunit F6, ATP5PB/subunit b, ATP5PD/subunit d, ATP5PO/subunit OSCP. ATP synthase complex consists of a soluble F(1) head domain (subunits alpha(3) and beta(3)) - the catalytic core - and a membrane F(0) domain - the membrane proton channel (subunits c, a, 8, e, f, g, k and j). These two domains are linked by a central stalk (subunits gamma, delta, and epsilon) rotating inside the F1 region and a stationary peripheral stalk (subunits F6, b, d, and OSCP). In response to mitochondrial stress, the precursor protein is ubiquitinated by the SIFI complex in the cytoplasm before mitochondrial import, leading to its degradation. Within the SIFI complex, UBR4 initiates ubiquitin chain that are further elongated or branched by KCMF1. In terms of tissue distribution, expressed by the principal cells of the epididymis. Detected in flagella of epididymal sperm (at protein level).

The protein resides in the mitochondrion. Its subcellular location is the mitochondrion inner membrane. Its function is as follows. Subunit OSCP, of the mitochondrial membrane ATP synthase complex (F(1)F(0) ATP synthase or Complex V) that produces ATP from ADP in the presence of a proton gradient across the membrane which is generated by electron transport complexes of the respiratory chain. ATP synthase complex consist of a soluble F(1) head domain - the catalytic core - and a membrane F(1) domain - the membrane proton channel. These two domains are linked by a central stalk rotating inside the F(1) region and a stationary peripheral stalk. During catalysis, ATP synthesis in the catalytic domain of F(1) is coupled via a rotary mechanism of the central stalk subunits to proton translocation. In vivo, can only synthesize ATP although its ATP hydrolase activity can be activated artificially in vitro. Part of the complex F(0) domain. Part of the complex F(0) domain and the peripheric stalk, which acts as a stator to hold the catalytic alpha(3)beta(3) subcomplex and subunit a/ATP6 static relative to the rotary elements. This Rattus norvegicus (Rat) protein is ATP synthase peripheral stalk subunit OSCP, mitochondrial.